The chain runs to 254 residues: Phosphoribosylaminoimidazole-succinocarboxamide synthase (254 aa).

The protein belongs to the SAICAR synthetase family.

It carries out the reaction 5-amino-1-(5-phospho-D-ribosyl)imidazole-4-carboxylate + L-aspartate + ATP = (2S)-2-[5-amino-1-(5-phospho-beta-D-ribosyl)imidazole-4-carboxamido]succinate + ADP + phosphate + 2 H(+). It functions in the pathway purine metabolism; IMP biosynthesis via de novo pathway; 5-amino-1-(5-phospho-D-ribosyl)imidazole-4-carboxamide from 5-amino-1-(5-phospho-D-ribosyl)imidazole-4-carboxylate: step 1/2. In Bartonella tribocorum (strain CIP 105476 / IBS 506), this protein is Phosphoribosylaminoimidazole-succinocarboxamide synthase.